Here is a 459-residue protein sequence, read N- to C-terminus: Ribulose bisphosphate carboxylase large chain (459 aa).

The residue at position 4 (K4) is an N6,N6,N6-trimethyllysine. 2 residues coordinate substrate: N113 and T163. K165 (proton acceptor) is an active-site residue. K167 lines the substrate pocket. K191, D193, and E194 together coordinate Mg(2+). K191 bears the N6-carboxylysine mark. The Proton acceptor role is filled by H284. Substrate-binding residues include R285, H317, and S369.

This sequence belongs to the RuBisCO large chain family. Type I subfamily. Heterohexadecamer of 8 large chains and 8 small chains; disulfide-linked. The disulfide link is formed within the large subunit homodimers. It depends on Mg(2+) as a cofactor. The disulfide bond which can form in the large chain dimeric partners within the hexadecamer appears to be associated with oxidative stress and protein turnover.

The protein resides in the plastid. Its subcellular location is the chloroplast. It catalyses the reaction 2 (2R)-3-phosphoglycerate + 2 H(+) = D-ribulose 1,5-bisphosphate + CO2 + H2O. The catalysed reaction is D-ribulose 1,5-bisphosphate + O2 = 2-phosphoglycolate + (2R)-3-phosphoglycerate + 2 H(+). RuBisCO catalyzes two reactions: the carboxylation of D-ribulose 1,5-bisphosphate, the primary event in carbon dioxide fixation, as well as the oxidative fragmentation of the pentose substrate in the photorespiration process. Both reactions occur simultaneously and in competition at the same active site. This Heuchera micrantha (Alum root) protein is Ribulose bisphosphate carboxylase large chain.